The following is a 177-amino-acid chain: Large ribosomal subunit protein uL6 (177 aa).

The protein belongs to the universal ribosomal protein uL6 family. As to quaternary structure, part of the 50S ribosomal subunit.

In terms of biological role, this protein binds to the 23S rRNA, and is important in its secondary structure. It is located near the subunit interface in the base of the L7/L12 stalk, and near the tRNA binding site of the peptidyltransferase center. The chain is Large ribosomal subunit protein uL6 from Methylorubrum populi (strain ATCC BAA-705 / NCIMB 13946 / BJ001) (Methylobacterium populi).